A 417-amino-acid polypeptide reads, in one-letter code: Serine--tRNA ligase (417 aa).

Residue 225–227 (TLE) coordinates L-serine. 256–258 (RQE) contacts ATP. Residue E279 participates in L-serine binding. An ATP-binding site is contributed by 343–346 (EVSS). T379 contributes to the L-serine binding site.

It belongs to the class-II aminoacyl-tRNA synthetase family. Type-1 seryl-tRNA synthetase subfamily. Homodimer. The tRNA molecule binds across the dimer.

The protein resides in the cytoplasm. It carries out the reaction tRNA(Ser) + L-serine + ATP = L-seryl-tRNA(Ser) + AMP + diphosphate + H(+). The catalysed reaction is tRNA(Sec) + L-serine + ATP = L-seryl-tRNA(Sec) + AMP + diphosphate + H(+). Its pathway is aminoacyl-tRNA biosynthesis; selenocysteinyl-tRNA(Sec) biosynthesis; L-seryl-tRNA(Sec) from L-serine and tRNA(Sec): step 1/1. Catalyzes the attachment of serine to tRNA(Ser). Is also able to aminoacylate tRNA(Sec) with serine, to form the misacylated tRNA L-seryl-tRNA(Sec), which will be further converted into selenocysteinyl-tRNA(Sec). The chain is Serine--tRNA ligase from Mycoplasma genitalium (strain ATCC 33530 / DSM 19775 / NCTC 10195 / G37) (Mycoplasmoides genitalium).